The chain runs to 481 residues: Tagaturonate/fructuronate epimerase (481 aa).

The active-site Proton acceptor is the aspartate 161. Histidine 162 provides a ligand contact to a divalent metal cation. Catalysis depends on glutamate 266, which acts as the Proton donor. Positions 308 and 341 each coordinate a divalent metal cation.

It belongs to the UxaE family. A divalent metal cation is required as a cofactor.

It carries out the reaction keto-D-tagaturonate = keto-D-fructuronate. In terms of biological role, catalyzes the epimerization of D-tagaturonate (D-TagA) to D-fructuronate (D-FruA). The sequence is that of Tagaturonate/fructuronate epimerase from Thermotoga maritima (strain ATCC 43589 / DSM 3109 / JCM 10099 / NBRC 100826 / MSB8).